We begin with the raw amino-acid sequence, 365 residues long: Zinc finger TRAF-type-containing protein 1-B (365 aa).

The disordered stretch occupies residues 1–56 (MSEEREAPGPLASSSAGLGAEVGQEEVPGGAGPARLLLLPSDSDGPPKKRLRSEAE). Residues 72-117 (CAVCLDLPKASVYQCTNGHLMCAGCFIHLLADARLKEEQATCPNCR) form an RING-type; degenerate zinc finger. A TRAF-type zinc finger spans residues 113–186 (CPNCRCEISK…PWQGPYHELT (74 aa)).

This sequence belongs to the ZFTRAF1 family. As to quaternary structure, interacts with LGALS3.

It localises to the cytoplasm. The polypeptide is Zinc finger TRAF-type-containing protein 1-B (Xenopus laevis (African clawed frog)).